Consider the following 170-residue polypeptide: Flavodoxin (170 aa).

In terms of domain architecture, Flavodoxin-like spans 4–165; it reads IGLFYGTQTG…RIKTWVSQLK (162 aa).

Belongs to the flavodoxin family. Requires FMN as cofactor.

Functionally, low-potential electron donor to a number of redox enzymes. The sequence is that of Flavodoxin (isiB) from Synechococcus elongatus (strain ATCC 33912 / PCC 7942 / FACHB-805) (Anacystis nidulans R2).